We begin with the raw amino-acid sequence, 341 residues long: Methionine import ATP-binding protein MetN (341 aa).

In terms of domain architecture, ABC transporter spans 2 to 241; that stretch reads IELNQIVKRY…PQHDVTKRFV (240 aa). ATP is bound at residue 38–45; the sequence is GFSGAGKS.

Belongs to the ABC transporter superfamily. Methionine importer (TC 3.A.1.24) family. In terms of assembly, the complex is composed of two ATP-binding proteins (MetN), two transmembrane proteins (MetI) and a solute-binding protein (MetQ).

Its subcellular location is the cell membrane. The catalysed reaction is L-methionine(out) + ATP + H2O = L-methionine(in) + ADP + phosphate + H(+). It catalyses the reaction D-methionine(out) + ATP + H2O = D-methionine(in) + ADP + phosphate + H(+). Its function is as follows. Part of the ABC transporter complex MetNIQ involved in methionine import. Responsible for energy coupling to the transport system. This is Methionine import ATP-binding protein MetN from Staphylococcus saprophyticus subsp. saprophyticus (strain ATCC 15305 / DSM 20229 / NCIMB 8711 / NCTC 7292 / S-41).